An 89-amino-acid chain; its full sequence is Large ribosomal subunit protein eL34 (89 aa).

The interval glycine 45–leucine 71 is disordered.

The protein belongs to the eukaryotic ribosomal protein eL34 family. Part of the 50S ribosomal subunit.

The protein is Large ribosomal subunit protein eL34 of Pyrococcus furiosus (strain ATCC 43587 / DSM 3638 / JCM 8422 / Vc1).